The primary structure comprises 988 residues: Exportin-T (988 aa).

The protein belongs to the exportin family.

The protein resides in the nucleus. It localises to the cytoplasm. In terms of biological role, tRNA nucleus export receptor which facilitates tRNA translocation across the nuclear pore complex. Involved in pre-tRNA splicing, probably by affecting the interaction of pre-tRNA with splicing endonuclease. The protein is Exportin-T (LOS1) of Lodderomyces elongisporus (strain ATCC 11503 / CBS 2605 / JCM 1781 / NBRC 1676 / NRRL YB-4239) (Yeast).